Here is a 216-residue protein sequence, read N- to C-terminus: GTP cyclohydrolase 1 2 (216 aa).

Belongs to the GTP cyclohydrolase I family. As to quaternary structure, homomer.

It carries out the reaction GTP + H2O = 7,8-dihydroneopterin 3'-triphosphate + formate + H(+). It participates in cofactor biosynthesis; 7,8-dihydroneopterin triphosphate biosynthesis; 7,8-dihydroneopterin triphosphate from GTP: step 1/1. This chain is GTP cyclohydrolase 1 2 (folE2), found in Nostoc sp. (strain PCC 7120 / SAG 25.82 / UTEX 2576).